The chain runs to 181 residues: Oligoribonuclease (181 aa).

Positions 8 to 171 (LIWIDLEMTG…QDIQESIAEL (164 aa)) constitute an Exonuclease domain. Residue Tyr129 is part of the active site.

The protein belongs to the oligoribonuclease family.

The protein resides in the cytoplasm. Functionally, 3'-to-5' exoribonuclease specific for small oligoribonucleotides. The sequence is that of Oligoribonuclease from Shewanella baltica (strain OS155 / ATCC BAA-1091).